We begin with the raw amino-acid sequence, 428 residues long: Leucine-rich repeat-containing protein 42 (428 aa).

LRR repeat units follow at residues 149–170 (VLCSLCLRNRYLVISEKLEEIK), 174–195 (ELTCLDLSCCKLGDEHELLEHL), 202–222 (SVTQLHLKDNCLSDAGVRKMT), 234–255 (NLTLLDLSCNPEITDAGIGYLF), and 259–280 (KLNCLDISGTGLKDIKTVKHKL). The disordered stretch occupies residues 379–412 (KHEAISSQESKKSKKRPFEESETEQNNSSQPSKQ). 2 positions are modified to phosphoserine: S406 and S407.

This sequence belongs to the LRRC42 family.

In Homo sapiens (Human), this protein is Leucine-rich repeat-containing protein 42 (LRRC42).